A 149-amino-acid chain; its full sequence is Large ribosomal subunit protein uL15 (149 aa).

The interval 30–63 is disordered; sequence GLGKTAGRGHKGSFARKGGGKIKPGFEGGQTPMQ. Over residues 36–49 the composition is skewed to basic residues; it reads GRGHKGSFARKGGG.

The protein belongs to the universal ribosomal protein uL15 family. Part of the 50S ribosomal subunit.

Functionally, binds to the 23S rRNA. The polypeptide is Large ribosomal subunit protein uL15 (Xylella fastidiosa (strain 9a5c)).